Here is a 148-residue protein sequence, read N- to C-terminus: MANVSNCEIPENLLYFIEGKNTVWAKQEAPDVIVVGITDIAQTMAGKVVKVRLKKKGTKVERGKPVATMESGKWAGPVPAPASGEIIDVNPDVEKNPVLVNQDPYGKGWLVKMKVNNPEELKQLVTGSAAVSKLTELINSEKLQCKRL.

In terms of domain architecture, Lipoyl-binding spans 32–114 (VIVVGITDIA…YGKGWLVKMK (83 aa)). The residue at position 73 (K73) is an N6-lipoyllysine.

It belongs to the GcvH family. The glycine cleavage system is composed of four proteins: P, T, L and H. (R)-lipoate is required as a cofactor.

Its function is as follows. The glycine cleavage system catalyzes the degradation of glycine. The H protein shuttles the methylamine group of glycine from the P protein to the T protein. The polypeptide is Probable glycine cleavage system H protein 2 (Sulfurisphaera tokodaii (strain DSM 16993 / JCM 10545 / NBRC 100140 / 7) (Sulfolobus tokodaii)).